Reading from the N-terminus, the 295-residue chain is MAPSNLPPVFNATSQDIEMLLAAQCHLGSKNLQVHMEPYLWKTRPDGINVINIGKTWEKIVLAARIIAAIDNPADICVISARPYGQRAVLKFAAHTGAVAIAGRFTPGNFTNYITRSFKEPRLIIVTDPRTDSQAIKEASYVNIPVIALCDTDSPTEFVDVAIPTNNKGRHAIGLIWWMLAREVLRLRGTLANRESEWDVVVDLYFYRDPEAEENKEIEETKVPGAEEVGAAAIESGLVGDSWQAQATPGFSAGVAVPGTAVPGWEADVSTDWAASSAPAAETLADPAADPSVKW.

This sequence belongs to the universal ribosomal protein uS2 family. Component of the small ribosomal subunit. Mature ribosomes consist of a small (40S) and a large (60S) subunit. The 40S subunit contains about 33 different proteins and 1 molecule of RNA (18S). The 60S subunit contains about 49 different proteins and 3 molecules of RNA (25S, 5.8S and 5S). Interacts with RPS21.

The protein resides in the cytoplasm. In terms of biological role, required for the assembly and/or stability of the 40S ribosomal subunit. Required for the processing of the 20S rRNA-precursor to mature 18S rRNA in a late step of the maturation of 40S ribosomal subunits. The chain is Small ribosomal subunit protein uS2 from Paracoccidioides brasiliensis (strain Pb03).